Consider the following 142-residue polypeptide: Large ribosomal subunit protein uL13 (142 aa).

It belongs to the universal ribosomal protein uL13 family. Part of the 50S ribosomal subunit.

In terms of biological role, this protein is one of the early assembly proteins of the 50S ribosomal subunit, although it is not seen to bind rRNA by itself. It is important during the early stages of 50S assembly. This Shewanella denitrificans (strain OS217 / ATCC BAA-1090 / DSM 15013) protein is Large ribosomal subunit protein uL13.